Here is a 698-residue protein sequence, read N- to C-terminus: Protein artemis (698 aa).

T380 carries the phosphothreonine modification. A Phosphoserine modification is found at S385. 3 disordered regions span residues 445–485 (ANFV…DPDV), 505–595 (LENL…DSIS), and 620–669 (NGVP…LPKP). Acidic residues predominate over residues 449–461 (DCDESNSDSEGEL). Residues 508–521 (LPSSIETGGSQSPK) show a composition bias toward polar residues. The span at 538-551 (THISSQNSSQSTHI) shows a compositional bias: low complexity. Positions 552-583 (TDQGSQGWDSQCDTVLLSSQEKSGGDSTSLNK) are enriched in polar residues. Low complexity predominate over residues 641 to 655 (TSLTSTQADSQSSSD). The residue at position 650 (S650) is a Phosphoserine; by ATM.

Belongs to the DNA repair metallo-beta-lactamase (DRMBL) family. In terms of assembly, interacts with LIG4; the interaction is direct. Interacts with ATM. Interacts with BRCA1. Interacts with PRKDC. Interacts with TP53BP1. Also exhibits ATM- and phosphorylation-dependent interaction with the MRN complex, composed of MRE11, RAD50, and NBN. Post-translationally, phosphorylation on undefined residues by PRKDC may stimulate endonucleolytic activity on 5' and 3' hairpins and overhangs. PRKDC must remain present, even after phosphorylation, for efficient hairpin opening. Also phosphorylated by ATM in response to ionizing radiation (IR) and by ATR in response to ultraviolet (UV) radiation.

It is found in the nucleus. Functionally, required for V(D)J recombination, the process by which exons encoding the antigen-binding domains of immunoglobulins and T-cell receptor proteins are assembled from individual V, (D), and J gene segments. V(D)J recombination is initiated by the lymphoid specific RAG endonuclease complex, which generates site specific DNA double strand breaks (DSBs). These DSBs present two types of DNA end structures: hairpin sealed coding ends and phosphorylated blunt signal ends. These ends are independently repaired by the non homologous end joining (NHEJ) pathway to form coding and signal joints respectively. This protein exhibits single-strand specific 5'-3' exonuclease activity in isolation, and acquires endonucleolytic activity on 5' and 3' hairpins and overhangs when in a complex with PRKDC. The latter activity is required specifically for the resolution of closed hairpins prior to the formation of the coding joint. May also be required for the repair of complex DSBs induced by ionizing radiation, which require substantial end-processing prior to religation by NHEJ. This Rattus norvegicus (Rat) protein is Protein artemis (Dclre1c).